Reading from the N-terminus, the 231-residue chain is MASTALEIVAFVVSISGWVLVSSTLPTDYWKVSTIDGTVITTATYFANLWKICVTDSTGVANCKEFPSMLALDGYIQACRGLMIAAVSLGFFGSIFALFGMKCTKVGGSDQAKAKIACLAGIVFILSGLCSMTGCSLYANKITTEFFDPLYMEQKYELGAALFIGWAGASLCIIGGVIFCFSISDNNKTPRMGYTYNGPTSAMSSRTKYQGGEGDFKTTGPSKQFDKNAYV.

The chain crosses the membrane as a helical span at residues 1 to 21; the sequence is MASTALEIVAFVVSISGWVLV. The Extracellular portion of the chain corresponds to 22 to 80; sequence SSTLPTDYWKVSTIDGTVITTATYFANLWKICVTDSTGVANCKEFPSMLALDGYIQACR. A helical membrane pass occupies residues 81-101; sequence GLMIAAVSLGFFGSIFALFGM. The Cytoplasmic portion of the chain corresponds to 102 to 115; it reads KCTKVGGSDQAKAK. The helical transmembrane segment at 116–136 threads the bilayer; that stretch reads IACLAGIVFILSGLCSMTGCS. The Extracellular segment spans residues 137–160; the sequence is LYANKITTEFFDPLYMEQKYELGA. The chain crosses the membrane as a helical span at residues 161–181; that stretch reads ALFIGWAGASLCIIGGVIFCF. The Cytoplasmic portion of the chain corresponds to 182-231; it reads SISDNNKTPRMGYTYNGPTSAMSSRTKYQGGEGDFKTTGPSKQFDKNAYV.

It belongs to the claudin family. In terms of assembly, can form homodimers both in trans (interaction between CLDN10 molecules in opposing membranes) and in cis (interaction between CLDN10 molecules within one membrane). Interacts with CLDN19. Widely expressed, with highest expression detected in brain cortex, kidney and lung. In kidney, the expression is highest in medulla, with transcripts being detected in medullary thick ascending limb of Henle's loop (mTAL) and outer and inner medullary collecting ducts. Expressed in salivary glands and skin. As to expression, detected in kidney with transcripts being detected in PCT, mTAL and cortical collecting duct. Detected in uterus. Expressed in proximal tubules (at protein level). In terms of tissue distribution, only detected in kidney and uterus. Detected in kidney with transcripts being detected in PCT, mTAL and cortical collecting duct. Detected in uterus. As to expression, expressed in the inner ear where it is detected in organ of Corti, marginal cells of stria vascularis, Reissner's membrane and spiral limbus (at protein level).

It is found in the cell junction. Its subcellular location is the tight junction. The protein resides in the cell membrane. The protein localises to the endoplasmic reticulum. The catalysed reaction is Na(+)(in) = Na(+)(out). The enzyme catalyses Li(+)(in) = Li(+)(out). It catalyses the reaction K(+)(in) = K(+)(out). It carries out the reaction Rb(+)(in) = Rb(+)(out). The catalysed reaction is Cs(+)(in) = Cs(+)(out). The enzyme catalyses NH4(+)(in) = NH4(+)(out). It catalyses the reaction methylamine(out) = methylamine(in). It carries out the reaction Mg(2+)(in) = Mg(2+)(out). The catalysed reaction is Ca(2+)(in) = Ca(2+)(out). The enzyme catalyses Sr(2+)(in) = Sr(2+)(out). It catalyses the reaction chloride(in) = chloride(out). It carries out the reaction nitrate(in) = nitrate(out). Forms paracellular channels: polymerizes in tight junction strands with cation- and anion-selective channels through the strands, conveying epithelial permeability in a process known as paracellular tight junction permeability. Its function is as follows. Forms cation-selective paracellular channels. In sweat glands and in the thick ascending limb (TAL) of Henle's loop in kidney, it controls paracellular sodium permeability which is essential for proper sweat production and renal function. Functionally, forms anion-selective paracellular channels. In renal proximal tubules, it conveys selective chloride over hydrogencarbonate anion permeability which is required for renal chloride reabsorption and salt homeostasis. This Mus musculus (Mouse) protein is Claudin-10.